The primary structure comprises 90 residues: UPF0367 protein Npun_R4552 (90 aa).

The protein belongs to the UPF0367 family.

The polypeptide is UPF0367 protein Npun_R4552 (Nostoc punctiforme (strain ATCC 29133 / PCC 73102)).